A 150-amino-acid polypeptide reads, in one-letter code: Protein SprT-like (150 aa).

The SprT-like domain maps to 11–149 (ELVDKLSLTY…CGKCRGSLKE (139 aa)). Position 70 (His-70) interacts with Zn(2+). Residue Glu-71 is part of the active site. Zn(2+) is bound at residue His-74.

This sequence belongs to the SprT family. Zn(2+) serves as cofactor.

The protein resides in the cytoplasm. The chain is Protein SprT-like from Oceanobacillus iheyensis (strain DSM 14371 / CIP 107618 / JCM 11309 / KCTC 3954 / HTE831).